A 515-amino-acid polypeptide reads, in one-letter code: 2,3-bisphosphoglycerate-independent phosphoglycerate mutase (515 aa).

The Mn(2+) site is built by Asp17 and Ser67. Ser67 acts as the Phosphoserine intermediate in catalysis. Residues His128, 157–158 (RD), Arg190, Arg196, 262–265 (RADR), and Lys336 contribute to the substrate site. The Mn(2+) site is built by Asp403, His407, Asp444, His445, and His463.

Belongs to the BPG-independent phosphoglycerate mutase family. In terms of assembly, monomer. Requires Mn(2+) as cofactor.

The enzyme catalyses (2R)-2-phosphoglycerate = (2R)-3-phosphoglycerate. Its pathway is carbohydrate degradation; glycolysis; pyruvate from D-glyceraldehyde 3-phosphate: step 3/5. Catalyzes the interconversion of 2-phosphoglycerate and 3-phosphoglycerate. The polypeptide is 2,3-bisphosphoglycerate-independent phosphoglycerate mutase (Acinetobacter baylyi (strain ATCC 33305 / BD413 / ADP1)).